The chain runs to 225 residues: tRNA (guanine-N(1)-)-methyltransferase (225 aa).

S-adenosyl-L-methionine contacts are provided by residues G112 and 132-137 (IGDYVL).

Belongs to the RNA methyltransferase TrmD family. Homodimer.

Its subcellular location is the cytoplasm. It catalyses the reaction guanosine(37) in tRNA + S-adenosyl-L-methionine = N(1)-methylguanosine(37) in tRNA + S-adenosyl-L-homocysteine + H(+). In terms of biological role, specifically methylates guanosine-37 in various tRNAs. The polypeptide is tRNA (guanine-N(1)-)-methyltransferase (Flavobacterium psychrophilum (strain ATCC 49511 / DSM 21280 / CIP 103535 / JIP02/86)).